We begin with the raw amino-acid sequence, 242 residues long: Probable transcriptional regulatory protein LSL_0422 (242 aa).

Positions 1 to 21 (MSGHSKWHNIQGRKNAQDAKR) are disordered.

It belongs to the TACO1 family.

The protein resides in the cytoplasm. The sequence is that of Probable transcriptional regulatory protein LSL_0422 from Ligilactobacillus salivarius (strain UCC118) (Lactobacillus salivarius).